We begin with the raw amino-acid sequence, 545 residues long: Tetrahydrocannabinolic acid synthase (545 aa).

Positions 1–28 (MNCSAFSFWFVCKIIFFFLSFHIQISIA) are cleaved as a signal peptide. An intrachain disulfide couples Cys37 to Cys99. Asn65 and Asn89 each carry an N-linked (GlcNAc...) asparagine glycan. One can recognise an FAD-binding PCMH-type domain in the interval 77-251 (TTPKPLVIVT…AAWKIKLVAV (175 aa)). FAD is bound by residues 109–115 (TRSGGHD) and Ser120. Residues 114–176 (HDAEGMSYIS…ENLSFPGGYC (63 aa)) constitute a cross-link (6-(S-cysteinyl)-8alpha-(pros-histidyl)-FAD (His-Cys)). An N-linked (GlcNAc...) asparagine glycan is attached at Asn168. FAD is bound by residues Cys176, 180-184 (GVGGH), Tyr190, Glu236, and Ile241. His292 is a binding site for cannabigerolate. N-linked (GlcNAc...) asparagine glycosylation is found at Asn297, Asn305, and Asn329. 2 residues coordinate cannabigerolate: Tyr417 and Glu442. N-linked (GlcNAc...) asparagine glycosylation is present at Asn467. 481-483 (YLN) serves as a coordination point for FAD. Tyr484 functions as the Proton acceptor in the catalytic mechanism. Asn499 is a glycosylation site (N-linked (GlcNAc...) asparagine).

The protein belongs to the oxygen-dependent FAD-linked oxidoreductase family. In terms of assembly, monomer. Requires FAD as cofactor. In terms of processing, glycosylated when produced in a heterologous system. The deglycosylated THCA synthase has more catalytic activity than the glycosylated form. Post-translationally, the FAD cofactor is bound via a bicovalent 6-S-cysteinyl, 8alpha-N1-histidyl FAD linkage. Expressed in the secretory cells of glandular trichomes.

The protein localises to the secreted. It localises to the extracellular space. The protein resides in the apoplast. The catalysed reaction is cannabigerolate + O2 = Delta(9)-tetrahydrocannabinolate + H2O2. It participates in secondary metabolite biosynthesis; terpenoid biosynthesis. With respect to regulation, inhibited by Hg(2+). Functionally, oxidoreductase involved in the biosynthesis of cannabinoids-related terpenophenolic natural products, which have pharmacological activity. Catalyzes the oxidative cyclization of the monoterpene moiety in cannabigerolic acid (CBGA), producing delta(9)-tetrahydrocannabinolate (THCA), the major cannabioid in drug-type Cannabis plants. Can also use cannabinerolic acid as substrate, but not cannabigerol or cannabinerol. This is Tetrahydrocannabinolic acid synthase from Cannabis sativa (Hemp).